A 327-amino-acid polypeptide reads, in one-letter code: Deoxynucleotidyltransferase terminal-interacting protein 1 (327 aa).

The span at 1-11 (MGATGDTGGPR) shows a compositional bias: gly residues. 2 disordered regions span residues 1 to 34 (MGAT…PVLT) and 146 to 172 (KRGR…LPGH). An important for dimerization region spans residues 55 to 146 (MTTSFTDPAI…RLAHELPGIK (92 aa)). Residues 146–161 (KRGRQAEEESHREAPF) show a composition bias toward basic and acidic residues. The segment at residues 157–171 (REAPFPKRGKVGLPG) is a DNA-binding region (a.T hook). The Nuclear localization signal motif lies at 162-168 (PKRGKVG). Positions 195 to 314 (REGPKWDPAR…MRKYMETLRT (120 aa)) are important for DNA and nucleosome binding. The segment at residues 214–235 (GSRANKALGMGGTRGRIYIKHP) is a DNA-binding region (H-T-H motif).

In terms of assembly, monomer and homodimer. A minor proportion may form homotrimers. Interacts with ZNF541. Interacts with the terminal deoxynucleotidyltransferase DNTT. Interacts with TRERF1. Identified in a histone deacetylase complex that contains DNTTIP1, HDAC1 and MIDEAS; this complex assembles into a tetramer that contains four copies of each protein chain. Component of a histone deacetylase complex containing DNTTIP1, ZNF541, HDAC1 and HDAC2. Identified in a complex with KCTD19, HDAC1, HDAC2 and ZNF541. As to expression, expressed in thymus, bone marrow and spleen.

The protein resides in the nucleus. Functionally, increases DNTT terminal deoxynucleotidyltransferase activity (in vitro). Also acts as a transcriptional regulator, binding to the consensus sequence 5'-GNTGCATG-3' following an AT-tract. Associates with RAB20 promoter and positively regulates its transcription. Binds DNA and nucleosomes; may recruit HDAC1 complexes to nucleosomes or naked DNA. The sequence is that of Deoxynucleotidyltransferase terminal-interacting protein 1 (Dnttip1) from Rattus norvegicus (Rat).